The following is a 244-amino-acid chain: Probable transcriptional regulatory protein XfasM23_0940 (244 aa).

It belongs to the TACO1 family.

The protein localises to the cytoplasm. In Xylella fastidiosa (strain M23), this protein is Probable transcriptional regulatory protein XfasM23_0940.